The primary structure comprises 254 residues: Glutathione S-transferase U12 (254 aa).

The Nuclear localization signal motif lies at 19–23; the sequence is KKRKK. The GST N-terminal domain maps to 33–114; that stretch reads TTVKLIGTWA…YVDESWPSDL (82 aa). Glutathione-binding positions include 43–44, 71–72, 85–86, and 98–99; these read SP, GK, KV, and ES. One can recognise a GST C-terminal domain in the interval 120 to 252; that stretch reads LPSERAFARF…EFIEFAKKKF (133 aa).

The protein belongs to the GST superfamily. Tau family.

The protein localises to the nucleus. The catalysed reaction is RX + glutathione = an S-substituted glutathione + a halide anion + H(+). In terms of biological role, may be involved in the conjugation of reduced glutathione to a wide number of exogenous and endogenous hydrophobic electrophiles and have a detoxification role against certain herbicides. The chain is Glutathione S-transferase U12 (GSTU12) from Arabidopsis thaliana (Mouse-ear cress).